The primary structure comprises 282 residues: NAD(P)H-hydrate epimerase (282 aa).

Residues 1–53 (MSGLRTLLGLGLLVAGSRLPRVISQQSVCRARPIWWGTQRRGSETMAGAAVKY) constitute a mitochondrion transit peptide. Phosphoserine; by PKA is present on Ser43. In terms of domain architecture, YjeF N-terminal spans 59–269 (AQAVDQELFN…ALEKKYQLNL (211 aa)). 113–117 (NNGGD) provides a ligand contact to (6S)-NADPHX. Asn114 contacts K(+). Residue Lys138 is modified to N6-succinyllysine. Asp179 is a K(+) binding site. (6S)-NADPHX is bound by residues 183-189 (GFSFKGD) and Asp212. Ser215 lines the K(+) pocket.

The protein belongs to the NnrE/AIBP family. As to quaternary structure, homodimer. Interacts with APOA1 and APOA2. The cofactor is K(+). Undergoes physiological phosphorylation during sperm capacitation, downstream to PKA activation. In terms of tissue distribution, detected in testis and sperm (at protein level). Expressed at high levels in heart, liver, kidney, and testis.

It localises to the mitochondrion. The protein localises to the secreted. The enzyme catalyses (6R)-NADHX = (6S)-NADHX. The catalysed reaction is (6R)-NADPHX = (6S)-NADPHX. Its function is as follows. Catalyzes the epimerization of the S- and R-forms of NAD(P)HX, a damaged form of NAD(P)H that is a result of enzymatic or heat-dependent hydration. This is a prerequisite for the S-specific NAD(P)H-hydrate dehydratase to allow the repair of both epimers of NAD(P)HX. Accelerates cholesterol efflux from endothelial cells to high-density lipoprotein (HDL) and thereby regulates angiogenesis. This is NAD(P)H-hydrate epimerase from Mus musculus (Mouse).